Here is a 376-residue protein sequence, read N- to C-terminus: Glucose-1-phosphate adenylyltransferase (376 aa).

Residues Tyr101, Gly166, Glu181 to Lys182, and Ser192 contribute to the alpha-D-glucose 1-phosphate site.

This sequence belongs to the bacterial/plant glucose-1-phosphate adenylyltransferase family. Homotetramer.

It carries out the reaction alpha-D-glucose 1-phosphate + ATP + H(+) = ADP-alpha-D-glucose + diphosphate. The protein operates within glycan biosynthesis; glycogen biosynthesis. In terms of biological role, involved in the biosynthesis of ADP-glucose, a building block required for the elongation reactions to produce glycogen. Catalyzes the reaction between ATP and alpha-D-glucose 1-phosphate (G1P) to produce pyrophosphate and ADP-Glc. This chain is Glucose-1-phosphate adenylyltransferase, found in Bacillus thuringiensis (strain Al Hakam).